We begin with the raw amino-acid sequence, 339 residues long: Dihydroorotate dehydrogenase (quinone) (339 aa).

FMN-binding positions include 62–66 (AGLDK) and threonine 86. Lysine 66 is a substrate binding site. 111 to 115 (NRMGF) contacts substrate. FMN is bound by residues asparagine 139 and asparagine 172. Residue asparagine 172 participates in substrate binding. Serine 175 (nucleophile) is an active-site residue. Residue asparagine 177 coordinates substrate. Lysine 217 and threonine 245 together coordinate FMN. 246-247 (NT) contributes to the substrate binding site. Residues glycine 268, glycine 297, and 318–319 (YS) each bind FMN.

The protein belongs to the dihydroorotate dehydrogenase family. Type 2 subfamily. In terms of assembly, monomer. The cofactor is FMN.

It is found in the cell membrane. It carries out the reaction (S)-dihydroorotate + a quinone = orotate + a quinol. It participates in pyrimidine metabolism; UMP biosynthesis via de novo pathway; orotate from (S)-dihydroorotate (quinone route): step 1/1. Functionally, catalyzes the conversion of dihydroorotate to orotate with quinone as electron acceptor. The protein is Dihydroorotate dehydrogenase (quinone) of Shewanella denitrificans (strain OS217 / ATCC BAA-1090 / DSM 15013).